The sequence spans 269 residues: Putative hydro-lyase RL2444 (269 aa).

This sequence belongs to the D-glutamate cyclase family.

This Rhizobium johnstonii (strain DSM 114642 / LMG 32736 / 3841) (Rhizobium leguminosarum bv. viciae) protein is Putative hydro-lyase RL2444.